We begin with the raw amino-acid sequence, 98 residues long: NADH-ubiquinone oxidoreductase chain 4L (98 aa).

A run of 3 helical transmembrane segments spans residues 2 to 22 (PSIF…MLIF), 37 to 57 (MLSM…TMSF), and 61 to 81 (ILLL…LVTV).

It belongs to the complex I subunit 4L family. Core subunit of respiratory chain NADH dehydrogenase (Complex I) which is composed of 45 different subunits.

The protein localises to the mitochondrion inner membrane. It catalyses the reaction a ubiquinone + NADH + 5 H(+)(in) = a ubiquinol + NAD(+) + 4 H(+)(out). Functionally, core subunit of the mitochondrial membrane respiratory chain NADH dehydrogenase (Complex I) which catalyzes electron transfer from NADH through the respiratory chain, using ubiquinone as an electron acceptor. Part of the enzyme membrane arm which is embedded in the lipid bilayer and involved in proton translocation. This is NADH-ubiquinone oxidoreductase chain 4L (MT-ND4L) from Varecia rubra (Red ruffed lemur).